We begin with the raw amino-acid sequence, 210 residues long: Probable peroxygenase 7 (210 aa).

Residues 1–24 (MSHQTVALASKAKSPKPKRGKLDK) are disordered. Residues 25–60 (EKMTALEKHVSFFDRNKDGTVYPWETYQGFRALGTG) enclose the EF-hand domain. Position 33 (histidine 33) interacts with heme. Ca(2+) contacts are provided by aspartate 38, asparagine 40, aspartate 42, threonine 44, and glutamate 49. Positions 81–90 (PGKGFSPLFP) match the Proline-knot motif. The residue at position 188 (serine 188) is a Phosphoserine.

Belongs to the caleosin family. Homodimer. Heme b is required as a cofactor. It depends on Ca(2+) as a cofactor. Expressed in pollen coat.

It localises to the secreted. It catalyses the reaction RH + ROOH = ROH + ROH.. Functionally, probable calcium-binding peroxygenase. May be involved in pollination. The sequence is that of Probable peroxygenase 7 (PXG7) from Arabidopsis thaliana (Mouse-ear cress).